A 303-amino-acid polypeptide reads, in one-letter code: Acetyltransferase ataH (303 aa).

An N-terminal signal peptide occupies residues 1 to 23; the sequence is MPTTAAFLRALYILTTLRGIGTS. A run of 3 helical transmembrane segments spans residues 42–62, 194–214, and 257–277; these read FLLHTLVIIAAKYLVLDMMTF, LVFAISSCLHLAIDGRAGIML, and GYIWTWAFLSLVAPMYNFPLF.

Belongs to the wax synthase family.

The protein localises to the membrane. It functions in the pathway mycotoxin biosynthesis. Its function is as follows. Acetyltransferase; part of the gene cluster that mediates the biosynthesis of acetylaranotin, a member of the epipolythiodioxopiperazine (ETP) class of toxins characterized by a disulfide-bridged cyclic dipeptide. The first step of acetylaranotin biosynthesis is performed by the NRPS ataP which produces diketopiperazine cyclo-L-Phe-L-Phe via the condensation of 2 phenylalanines (L-Phe). The ataC domain of ataTC then catalyzes the formation of bishydroxylation of cyclo-L-Phe-L-Phe. The glutathione S-transferase domain ataG in ataIMG further catalyzes the conjugation of two glutathiones to the bishydroxylated intermediate. Next, the dipeptidase ataJ removes the Glu residues. The following step is performed by the carbon sulfur lyase domain ataI of ataIMG which may convert the bis-cysteinyl adduct to yield an epidithiol intermediate. The ataT domain from ataTC then catalyzes the oxidation of the free dithiols, followed by a cyclization step catalyzed by the cytochrome P450 ataF. AtaF probably acts as an epoxidase to promote a dual epoxidation formation at C8 and C9 along with C8' and C9', followed by the spontaneous nucleophilic attack of the amide nitrogens N10 and N10' to yield an intermediate with the pyrrolidine partial structure. The final steps of acetylaranotin biosynthesis involve the acetylation and ring rearrangement of an epitetrathiodiketopiperazine intermediate to produce acetylaranotin. AtaH probably catalyzes the acetylation of epitetrathiodiketopiperazine to produce a diacetate and ataY is responsible for the formation of the dihydrooxepin moiety that converts the diacetate intermediate to acetylaranotin via acetylapoaranotin. Both enzymes could function independently in the absence of the other. The acetylaranotin bis-thiomethyltransferase ataS located outside of acetylaranotin gene cluster is the main thiomethyltransferase responsible for converting acetylaranotin and its related intermediates to their methylated forms. This chain is Acetyltransferase ataH, found in Aspergillus terreus (strain NIH 2624 / FGSC A1156).